Consider the following 465-residue polypeptide: Antithrombin-III (465 aa).

The N-terminal stretch at 1–32 is a signal peptide; it reads MISNGIGTVTAGKRSICLLPLLLIGLWGCVTC. 2 cysteine pairs are disulfide-bonded: Cys-41–Cys-161 and Cys-54–Cys-128. Thr-64 bears the Phosphothreonine mark. Ser-69 bears the Phosphoserine mark. Trp-82 serves as a coordination point for heparin. Asn-129 carries an N-linked (GlcNAc...) asparagine glycan. Arg-162 lines the heparin pocket. A glycan (N-linked (GlcNAc...) asparagine) is linked at Asn-168. Position 178 (Arg-178) interacts with heparin. N-linked (GlcNAc...) asparagine glycosylation is found at Asn-188 and Asn-225. Cysteines 280 and 463 form a disulfide.

Belongs to the serpin family. Forms protease inhibiting heterodimer with TMPRSS7. Post-translationally, phosphorylated by FAM20C in the extracellular medium. In terms of tissue distribution, plasma.

It localises to the secreted. It is found in the extracellular space. Its function is as follows. Most important serine protease inhibitor in plasma that regulates the blood coagulation cascade. AT-III inhibits thrombin, matriptase-3/TMPRSS7, as well as factors IXa, Xa and XIa. Its inhibitory activity is greatly enhanced in the presence of heparin. This is Antithrombin-III (SERPINC1) from Bos taurus (Bovine).